A 131-amino-acid polypeptide reads, in one-letter code: Transcription antitermination protein NusB (131 aa).

It belongs to the NusB family.

Functionally, involved in transcription antitermination. Required for transcription of ribosomal RNA (rRNA) genes. Binds specifically to the boxA antiterminator sequence of the ribosomal RNA (rrn) operons. This Aliarcobacter butzleri (strain RM4018) (Arcobacter butzleri) protein is Transcription antitermination protein NusB.